A 522-amino-acid polypeptide reads, in one-letter code: Serine/threonine protein phosphatase 2A 59 kDa regulatory subunit B' gamma isoform (522 aa).

The interval 1–74 (MIKQIFGKLP…SSTSSNRTNQ (74 aa)) is disordered. A compositionally biased stretch (low complexity) spans 35-58 (PNSGISSISKPSSKSSASNSNGAN). Residues 63–74 (APSSTSSNRTNQ) are compositionally biased toward polar residues.

Belongs to the phosphatase 2A regulatory subunit B56 family. In terms of assembly, PP2A consists of a common heteromeric enzyme, composed of a catalytic subunit (subunits C), a constant regulatory subunit (subunit A), and a variety of regulatory subunits such as subunits B (the R2/B/PR55/B55, R3/B''/PR72/PR130/PR59 and R5/B'/B56 families). Interacts with BRI1. Interacts with IGMT1 and IGMT4. Interacts with ACO3 in the cytosol. In terms of tissue distribution, expressed ubiquitously at low levels. Expressed in roots, emerging lateral roots, cotyledons, leaves, floral stalks and flowers.

It localises to the cytoplasm. The protein localises to the cytosol. The protein resides in the nucleus. In terms of biological role, the B regulatory subunit may modulate substrate selectivity and catalytic activity, and may also direct the localization of the catalytic enzyme to a particular subcellular compartment. Required for the formation of the PP2A holoenzyme that negatively regulates brassinosteroid signaling by dephosphorylating and inactivating BRI1 in the cytoplasm. Seems to be functionally connected with CPR5 and may mediate the negative regulation of defense reactions and senescence under low irradiances. May contribute to the epigenetic regulation of defense gene expression. Involved in the control of methoxylation of indole glucosinolates and formation of 4-methoxy- indol-3-yl-methyl glucosinolate in leaves, through direct interaction with indole glucosinolate methyltransferases. Involved in growth regulation and stress signaling. Involved in the regulation of reactive oxygen species (ROS) signaling and maintenance of cellular ROS homeostasis. Required to control the level of ACO3 phosphorylation in the cytoplasm. Regulates hydrogen peroxide metabolism by controlling the abundance of AOX1A and AXO3/AOX1D in leaf mitochondria. May mediate dephosphorylation of CRT1 and promote the degradation of unfolded proteins in endoplasmic reticulum (ER). Involved in the regulation of flowering time by repressing FLC, the main flowering repressor gene. In Arabidopsis thaliana (Mouse-ear cress), this protein is Serine/threonine protein phosphatase 2A 59 kDa regulatory subunit B' gamma isoform (B'GAMMA).